The sequence spans 366 residues: Probable dual-specificity RNA methyltransferase RlmN (366 aa).

The active-site Proton acceptor is glutamate 107. One can recognise a Radical SAM core domain in the interval 113–342; it reads AEERMTACLS…MAQKFHVTVR (230 aa). Cysteines 120 and 353 form a disulfide. 3 residues coordinate [4Fe-4S] cluster: cysteine 127, cysteine 131, and cysteine 134. Residues 177–178, serine 210, 233–235, and asparagine 310 each bind S-adenosyl-L-methionine; these read GE and SLH. Cysteine 353 acts as the S-methylcysteine intermediate in catalysis.

The protein belongs to the radical SAM superfamily. RlmN family. Requires [4Fe-4S] cluster as cofactor.

The protein localises to the cytoplasm. The enzyme catalyses adenosine(2503) in 23S rRNA + 2 reduced [2Fe-2S]-[ferredoxin] + 2 S-adenosyl-L-methionine = 2-methyladenosine(2503) in 23S rRNA + 5'-deoxyadenosine + L-methionine + 2 oxidized [2Fe-2S]-[ferredoxin] + S-adenosyl-L-homocysteine. The catalysed reaction is adenosine(37) in tRNA + 2 reduced [2Fe-2S]-[ferredoxin] + 2 S-adenosyl-L-methionine = 2-methyladenosine(37) in tRNA + 5'-deoxyadenosine + L-methionine + 2 oxidized [2Fe-2S]-[ferredoxin] + S-adenosyl-L-homocysteine. Functionally, specifically methylates position 2 of adenine 2503 in 23S rRNA and position 2 of adenine 37 in tRNAs. In Chlorobium chlorochromatii (strain CaD3), this protein is Probable dual-specificity RNA methyltransferase RlmN.